We begin with the raw amino-acid sequence, 528 residues long: Probable rhamnogalacturonate lyase A (528 aa).

Positions 1-20 (MLSRTILFSTSFLWVRVANA) are cleaved as a signal peptide. 2 disulfide bridges follow: Cys50-Cys93 and Cys184-Cys193.

This sequence belongs to the polysaccharide lyase 4 family.

The protein localises to the secreted. The catalysed reaction is Endotype eliminative cleavage of L-alpha-rhamnopyranosyl-(1-&gt;4)-alpha-D-galactopyranosyluronic acid bonds of rhamnogalacturonan I domains in ramified hairy regions of pectin leaving L-rhamnopyranose at the reducing end and 4-deoxy-4,5-unsaturated D-galactopyranosyluronic acid at the non-reducing end.. Its function is as follows. Pectinolytic enzymes consist of four classes of enzymes: pectin lyase, polygalacturonase, pectin methylesterase and rhamnogalacturonase. Degrades the rhamnogalacturonan I (RG-I) backbone of pectin. The chain is Probable rhamnogalacturonate lyase A (rglA) from Aspergillus flavus (strain ATCC 200026 / FGSC A1120 / IAM 13836 / NRRL 3357 / JCM 12722 / SRRC 167).